A 25-amino-acid polypeptide reads, in one-letter code: Caerin-2.2 (25 aa).

Belongs to the frog skin active peptide (FSAP) family. Caerin subfamily. Expressed by the skin parotoid and/or rostral glands.

It is found in the secreted. In terms of biological role, antimicrobial peptide, that adopts an alpha helical conformation which can disrupt bacterial membranes. Each caerin displays a different antimicrobial specificity. This chain is Caerin-2.2, found in Ranoidea caerulea (Green tree frog).